The following is a 362-amino-acid chain: Serine/threonine-protein kinase SRK2D (362 aa).

The region spanning 23–279 (YDFVKDIGSG…IPEITSDKWF (257 aa)) is the Protein kinase domain. ATP-binding positions include 29–37 (IGSGNFGVA) and lysine 52. Residue aspartate 142 is the Proton acceptor of the active site.

The protein belongs to the protein kinase superfamily. Ser/Thr protein kinase family. Interacts with ABI1. Interacts with I-2, TOPP1 and TOPP2. Interacts with FREE1 (via C-terminus). In terms of tissue distribution, expressed in seeds, seedlings, roots (especially in tips), stems, leaves, shoots, flowers and siliques.

The enzyme catalyses L-seryl-[protein] + ATP = O-phospho-L-seryl-[protein] + ADP + H(+). It catalyses the reaction L-threonyl-[protein] + ATP = O-phospho-L-threonyl-[protein] + ADP + H(+). Its function is as follows. Together with SRK2I, key component and activator of the abscisic acid (ABA) signaling pathway that regulates numerous ABA responses, such as seed germination, Pro accumulation, root growth inhibition, dormancy and seedling growth, and, to a lesser extent, stomatal closure. In response to ABA, phosphorylates the ESCRT-I complex component FREE1, which is required for ABA-induced FREE1 nuclear import. The polypeptide is Serine/threonine-protein kinase SRK2D (SRK2D) (Arabidopsis thaliana (Mouse-ear cress)).